The sequence spans 463 residues: V-type ATP synthase beta chain (463 aa).

It belongs to the ATPase alpha/beta chains family.

Functionally, produces ATP from ADP in the presence of a proton gradient across the membrane. The V-type beta chain is a regulatory subunit. The chain is V-type ATP synthase beta chain from Halothermothrix orenii (strain H 168 / OCM 544 / DSM 9562).